The chain runs to 230 residues: Urease accessory protein UreG (230 aa).

Residue 33-40 (GPVGSGKT) participates in GTP binding.

Belongs to the SIMIBI class G3E GTPase family. UreG subfamily. Homodimer. UreD, UreF and UreG form a complex that acts as a GTP-hydrolysis-dependent molecular chaperone, activating the urease apoprotein by helping to assemble the nickel containing metallocenter of UreC. The UreE protein probably delivers the nickel.

The protein localises to the cytoplasm. Functionally, facilitates the functional incorporation of the urease nickel metallocenter. This process requires GTP hydrolysis, probably effectuated by UreG. The protein is Urease accessory protein UreG of Mycobacteroides abscessus (strain ATCC 19977 / DSM 44196 / CCUG 20993 / CIP 104536 / JCM 13569 / NCTC 13031 / TMC 1543 / L948) (Mycobacterium abscessus).